Reading from the N-terminus, the 301-residue chain is tRNA (guanine-N(7)-)-methyltransferase (301 aa).

Residues 1 to 26 (MSETPDSPRPVTPGSQASFGTYGGRP) form a disordered region. S-adenosyl-L-methionine-binding residues include Glu85, Glu110, Asn137, and Asp160. Residue Asp160 is part of the active site. Substrate is bound by residues Lys164 and Asp196. The interval 244–270 (APVREGRAPVSTEHTGPNEGVDEEGGW) is disordered. 280–283 (TSFE) contacts substrate.

The protein belongs to the class I-like SAM-binding methyltransferase superfamily. TrmB family.

The enzyme catalyses guanosine(46) in tRNA + S-adenosyl-L-methionine = N(7)-methylguanosine(46) in tRNA + S-adenosyl-L-homocysteine. It participates in tRNA modification; N(7)-methylguanine-tRNA biosynthesis. Functionally, catalyzes the formation of N(7)-methylguanine at position 46 (m7G46) in tRNA. This Paenarthrobacter aurescens (strain TC1) protein is tRNA (guanine-N(7)-)-methyltransferase.